Consider the following 336-residue polypeptide: MVASRNPQTARFCWQYLQLEQSLDFPDGELLRDEAVQETIYQQLFAPNAPTPLPPARYRLRVLKELTSRIESAIEDWETHGISDNLMDAMAELVAQPLPSEAEAAQERCYVTYYLSLLEGGLEKPHITLLESRSLISASGTTGLRTWEAALHLGQFLSVNSGLVKDKRVLELGTGTGYLAVLCAKYLGTSHVIASDGSEEVVEKLSDNLFVNGLQDSDKVQPMELKWGHALLGTEEEHWNGGRKIDVVLGADITYDVSVIPALIATLEELVDLYPGISIIIAATERNRETYETFLAACGRRGFSVTPESFPVPSRAEQKGPFYKDGTPIHICQLRR.

S-adenosyl-L-methionine is bound by residues Trp147, 173–175 (GTG), Asp196, Leu232, and Ala251.

It belongs to the class I-like SAM-binding methyltransferase superfamily. EEF2KMT family.

The protein resides in the cytoplasm. Functionally, S-adenosyl-L-methionine-dependent protein-lysine N-methyltransferase that methylates elongation factor 2. This is Protein-lysine N-methyltransferase EFM3 from Chaetomium thermophilum (strain DSM 1495 / CBS 144.50 / IMI 039719) (Thermochaetoides thermophila).